Here is a 795-residue protein sequence, read N- to C-terminus: Phenylalanine--tRNA ligase beta subunit (795 aa).

A tRNA-binding domain is found at 39–148; sequence ADEFHTVVVG…ADAPVGEDYR (110 aa). In terms of domain architecture, B5 spans 401–476; the sequence is PKRDGITLRA…RVYGYNSIQA (76 aa). Mg(2+) contacts are provided by Asp454, Asp460, Glu463, and Glu464. Residues 701–794 enclose the FDX-ACB domain; the sequence is SRYPSIRRDL…LKSEFNATLR (94 aa).

The protein belongs to the phenylalanyl-tRNA synthetase beta subunit family. Type 1 subfamily. In terms of assembly, tetramer of two alpha and two beta subunits. Mg(2+) is required as a cofactor.

It localises to the cytoplasm. It carries out the reaction tRNA(Phe) + L-phenylalanine + ATP = L-phenylalanyl-tRNA(Phe) + AMP + diphosphate + H(+). This is Phenylalanine--tRNA ligase beta subunit from Idiomarina loihiensis (strain ATCC BAA-735 / DSM 15497 / L2-TR).